Here is a 394-residue protein sequence, read N- to C-terminus: Elongation factor Tu 1 (394 aa).

One can recognise a tr-type G domain in the interval 10-204 (KPHVNVGTIG…YLDSYIPEPE (195 aa)). Residues 19–26 (GHVDHGKT) are G1. 19–26 (GHVDHGKT) provides a ligand contact to GTP. Thr-26 contributes to the Mg(2+) binding site. The G2 stretch occupies residues 60–64 (GITIN). The G3 stretch occupies residues 81–84 (DCPG). GTP contacts are provided by residues 81 to 85 (DCPGH) and 136 to 139 (NKCD). Residues 136–139 (NKCD) form a G4 region. Residues 174 to 176 (SAL) form a G5 region.

Belongs to the TRAFAC class translation factor GTPase superfamily. Classic translation factor GTPase family. EF-Tu/EF-1A subfamily. In terms of assembly, monomer.

Its subcellular location is the cytoplasm. The catalysed reaction is GTP + H2O = GDP + phosphate + H(+). Its function is as follows. GTP hydrolase that promotes the GTP-dependent binding of aminoacyl-tRNA to the A-site of ribosomes during protein biosynthesis. This Yersinia enterocolitica serotype O:8 / biotype 1B (strain NCTC 13174 / 8081) protein is Elongation factor Tu 1.